We begin with the raw amino-acid sequence, 101 residues long: Small ribosomal subunit protein bS6 (101 aa).

Belongs to the bacterial ribosomal protein bS6 family.

Its function is as follows. Binds together with bS18 to 16S ribosomal RNA. The sequence is that of Small ribosomal subunit protein bS6 from Micrococcus luteus (strain ATCC 4698 / DSM 20030 / JCM 1464 / CCM 169 / CCUG 5858 / IAM 1056 / NBRC 3333 / NCIMB 9278 / NCTC 2665 / VKM Ac-2230) (Micrococcus lysodeikticus).